A 240-amino-acid polypeptide reads, in one-letter code: RNA-binding protein pno1 (240 aa).

Positions methionine 1–lysine 15 are enriched in basic and acidic residues. Residues methionine 1–serine 61 are disordered. A KH domain is found at glutamine 164–valine 213.

This sequence belongs to the PNO1 family.

It is found in the nucleus. The protein resides in the nucleolus. The protein is RNA-binding protein pno1 (l(1)G0004) of Drosophila melanogaster (Fruit fly).